We begin with the raw amino-acid sequence, 619 residues long: Dihydroxy-acid dehydratase (619 aa).

Residue aspartate 81 participates in Mg(2+) binding. Cysteine 122 serves as a coordination point for [2Fe-2S] cluster. Residues aspartate 123 and lysine 124 each coordinate Mg(2+). Lysine 124 is modified (N6-carboxylysine). Residue cysteine 195 coordinates [2Fe-2S] cluster. Mg(2+) is bound at residue glutamate 491. Residue serine 517 is the Proton acceptor of the active site.

It belongs to the IlvD/Edd family. In terms of assembly, homodimer. It depends on [2Fe-2S] cluster as a cofactor. Mg(2+) serves as cofactor.

It carries out the reaction (2R)-2,3-dihydroxy-3-methylbutanoate = 3-methyl-2-oxobutanoate + H2O. It catalyses the reaction (2R,3R)-2,3-dihydroxy-3-methylpentanoate = (S)-3-methyl-2-oxopentanoate + H2O. It functions in the pathway amino-acid biosynthesis; L-isoleucine biosynthesis; L-isoleucine from 2-oxobutanoate: step 3/4. The protein operates within amino-acid biosynthesis; L-valine biosynthesis; L-valine from pyruvate: step 3/4. In terms of biological role, functions in the biosynthesis of branched-chain amino acids. Catalyzes the dehydration of (2R,3R)-2,3-dihydroxy-3-methylpentanoate (2,3-dihydroxy-3-methylvalerate) into 2-oxo-3-methylpentanoate (2-oxo-3-methylvalerate) and of (2R)-2,3-dihydroxy-3-methylbutanoate (2,3-dihydroxyisovalerate) into 2-oxo-3-methylbutanoate (2-oxoisovalerate), the penultimate precursor to L-isoleucine and L-valine, respectively. The protein is Dihydroxy-acid dehydratase of Sphingopyxis alaskensis (strain DSM 13593 / LMG 18877 / RB2256) (Sphingomonas alaskensis).